The following is a 212-amino-acid chain: F-box protein GID2 (212 aa).

Positions 1–74 (MKFRSDSSGG…AGEGEQPRVP (74 aa)) are disordered. Over residues 35–59 (DPSSSSSQGEASSSSQPPPQQQQEE) the composition is skewed to low complexity. In terms of domain architecture, F-box spans 70 to 116 (QPRVPDLGEDLVFEVLRRAEARTLAAAACVSRGWRQLAEDERLWEAA).

As to quaternary structure, part of some SCF(GID2) complex, which consist of a SKP1 protein, CUL1, GID2 and some RING box protein. Interacts directly with SKP2 and SKP15. Interacts directly with DELLA protein SLR1. May have a higher affinity for phosphorylated SLR1 proteins. In terms of tissue distribution, widely expressed. Preferentially expressed in unopened flowers, shoot apices and elongation stem. Expressed at lower level in the leaf blades, leaf sheaths, roots and rachis.

It localises to the nucleus. Its pathway is protein modification; protein ubiquitination. In terms of biological role, essential component of some SCF-type E3 ligase complex that positively regulates the gibberellin signaling pathway. Upon gibberellin treatment, the complex mediates the ubiquitination and subsequent degradation of DELLA protein SLR1, a repressor of the gibberellin pathway, leading to activate the pathway. The polypeptide is F-box protein GID2 (GID2) (Oryza sativa subsp. japonica (Rice)).